A 548-amino-acid chain; its full sequence is Probable malate:quinone oxidoreductase (548 aa).

This sequence belongs to the MQO family. FAD serves as cofactor.

It catalyses the reaction (S)-malate + a quinone = a quinol + oxaloacetate. The protein operates within carbohydrate metabolism; tricarboxylic acid cycle; oxaloacetate from (S)-malate (quinone route): step 1/1. The chain is Probable malate:quinone oxidoreductase from Escherichia coli O127:H6 (strain E2348/69 / EPEC).